The chain runs to 332 residues: T-cell surface glycoprotein CD1c2 (332 aa).

The first 17 residues, 1-17 (MLFLQFLFVDVVLGGSI), serve as a signal peptide directing secretion. Topologically, residues 18-300 (TENVVQENIS…IILYWGHGLS (283 aa)) are extracellular. 3 N-linked (GlcNAc...) asparagine glycosylation sites follow: N25, N38, and N75. 2 disulfide bridges follow: C120-C184 and C224-C279. Residues 205-292 (PEVWLSSSPN…HSSLRDQDII (88 aa)) enclose the Ig-like domain. A helical membrane pass occupies residues 301-321 (VILIALAVIVPLVLLIVLVLL). At 322 to 332 (CKKRCTYQGIP) the chain is on the cytoplasmic side.

As to quaternary structure, heterodimer with B2M (beta-2-microglobulin).

The protein resides in the cell membrane. Its subcellular location is the endosome membrane. Functionally, antigen-presenting protein that binds self and non-self lipid and glycolipid antigens and presents them to T-cell receptors on natural killer T-cells. The polypeptide is T-cell surface glycoprotein CD1c2 (CD1C2) (Cavia porcellus (Guinea pig)).